Reading from the N-terminus, the 98-residue chain is Feather keratin (98 aa).

An N-acetylalanine modification is found at Ala-1.

The protein belongs to the avian keratin family. The avian keratins (F-ker, S-ker, C-ker and B-ker) are a complex mixture of very similar polypeptides.

This Chroicocephalus novaehollandiae (Silver gull) protein is Feather keratin.